The sequence spans 576 residues: Putative SPbeta prophage-derived single-strand DNA-specific exonuclease YorK (576 aa).

Phosphotyrosine is present on tyrosine 473.

It belongs to the RecJ family.

Its function is as follows. Putative single-stranded-DNA-specific exonuclease. This chain is Putative SPbeta prophage-derived single-strand DNA-specific exonuclease YorK (yorK), found in Bacillus subtilis (strain 168).